Here is a 381-residue protein sequence, read N- to C-terminus: Cytochrome b (381 aa).

4 helical membrane-spanning segments follow: residues 34–54, 78–99, 114–134, and 179–199; these read FGSLLGLCLVIQIVTGLFLAM, WLIRNIHANGASLFFVCIYFHI, WNIGVILLFLLMATAFVGYVL, and FFAFHFLLPFLITALMIIHIL. Residues His84 and His98 each coordinate heme b. Residues His183 and His197 each coordinate heme b. A ubiquinone is bound at residue His202. A run of 4 helical transmembrane segments spans residues 227-247, 289-309, 321-341, and 348-368; these read YKDALGFLSLLILLGILALFL, LGGVLALLFSILILMLVPFLH, LTQVFFWILVANMLVLTWIGG, and FILIGQIASISYFSLFLIAIP.

The protein belongs to the cytochrome b family. In terms of assembly, the cytochrome bc1 complex contains 3 respiratory subunits (MT-CYB, CYC1 and UQCRFS1), 2 core proteins (UQCRC1 and UQCRC2) and probably 6 low-molecular weight proteins. The cofactor is heme b.

The protein resides in the mitochondrion inner membrane. In terms of biological role, component of the ubiquinol-cytochrome c reductase complex (complex III or cytochrome b-c1 complex) that is part of the mitochondrial respiratory chain. The b-c1 complex mediates electron transfer from ubiquinol to cytochrome c. Contributes to the generation of a proton gradient across the mitochondrial membrane that is then used for ATP synthesis. This is Cytochrome b (mt-cyb) from Carcharodon carcharias (Great white shark).